The primary structure comprises 375 residues: Platelet-derived growth factor receptor-like protein (375 aa).

The first 21 residues, 1–21, serve as a signal peptide directing secretion; the sequence is MKVWLLLGLLLVHEALEDVTG. A disordered region spans residues 22-64; sequence QHLPKNKRPKEPGENRIKPTNKKVKPKIPKMKDRDSANSAPKT. Residues 40–50 show a composition bias toward basic residues; sequence PTNKKVKPKIP. Residues 62–159 enclose the Ig-like C2-type 1 domain; that stretch reads PKTQSIMMQV…GYICRKDEAK (98 aa). Cys-96 and Cys-143 are oxidised to a cystine. N-linked (GlcNAc...) asparagine glycosylation is found at Asn-132 and Asn-219. The Ig-like C2-type 2 domain maps to 272 to 375; it reads PSTTILASSN…TTVATTVEFS (104 aa). A disulfide bridge connects residues Cys-293 and Cys-357.

As to quaternary structure, forms a complex composed of PDGFRL, TNK2 and GRB2. Expressed in colon, lung and liver.

It is found in the secreted. The protein is Platelet-derived growth factor receptor-like protein (PDGFRL) of Homo sapiens (Human).